A 198-amino-acid chain; its full sequence is Dephospho-CoA kinase (198 aa).

The DPCK domain maps to 3 to 198 (IVGITGGIGS…LLAKERLELA (196 aa)). Position 11-16 (11-16 (GSGKTT)) interacts with ATP.

Belongs to the CoaE family.

The protein localises to the cytoplasm. The catalysed reaction is 3'-dephospho-CoA + ATP = ADP + CoA + H(+). It participates in cofactor biosynthesis; coenzyme A biosynthesis; CoA from (R)-pantothenate: step 5/5. In terms of biological role, catalyzes the phosphorylation of the 3'-hydroxyl group of dephosphocoenzyme A to form coenzyme A. The chain is Dephospho-CoA kinase from Dehalococcoides mccartyi (strain ATCC BAA-2266 / KCTC 15142 / 195) (Dehalococcoides ethenogenes (strain 195)).